A 47-amino-acid polypeptide reads, in one-letter code: Delta-halcutoxin-Hcg1a (47 aa).

Intrachain disulfides connect Cys3-Cys43, Cys5-Cys33, and Cys26-Cys44.

The protein belongs to the sea anemone sodium channel inhibitory toxin family. Type II subfamily.

It is found in the secreted. The protein resides in the nematocyst. In terms of biological role, is potently lethal to crabs, although it showed neither lethal activity in mice nor hemolytic activity. May bind to voltage-gated sodium channels (Nav), thereby delaying their inactivation during signal transduction. The protein is Delta-halcutoxin-Hcg1a of Isohalcurias carlgreni (Sea anemone).